The following is a 376-amino-acid chain: Multiphosphoryl transfer protein (376 aa).

The region spanning 2 to 142 (FQLSVQDIHP…EELRALLMGE (141 aa)) is the PTS EIIA type-2 domain. The active-site Tele-phosphohistidine intermediate; for EIIA activity is the histidine 62. Histidine 62 bears the Phosphohistidine; by HPr mark. The interval 156–284 (TLDIVASDLL…LTSDDAPTDD (129 aa)) is m domain. The HPr domain maps to 285–375 (VLSAEFVVRN…DAIAAGLGEG (91 aa)). Residue histidine 299 is the Pros-phosphohistidine intermediate; for HPr activity of the active site. A Phosphohistidine; by EI modification is found at histidine 299.

The protein resides in the cytoplasm. The phosphoenolpyruvate-dependent sugar phosphotransferase system (sugar PTS), a major carbohydrate active transport system, catalyzes the phosphorylation of incoming sugar substrates concomitantly with their translocation across the cell membrane. The enzyme II FruAB PTS system is involved in fructose transport. In Escherichia coli O157:H7, this protein is Multiphosphoryl transfer protein.